Reading from the N-terminus, the 74-residue chain is Translation initiation factor IF-1 (74 aa).

An S1-like domain is found at 1-72; sequence MAKQDAIEME…TKGRITYRLR (72 aa).

The protein belongs to the IF-1 family. As to quaternary structure, component of the 30S ribosomal translation pre-initiation complex which assembles on the 30S ribosome in the order IF-2 and IF-3, IF-1 and N-formylmethionyl-tRNA(fMet); mRNA recruitment can occur at any time during PIC assembly.

It is found in the cytoplasm. Functionally, one of the essential components for the initiation of protein synthesis. Stabilizes the binding of IF-2 and IF-3 on the 30S subunit to which N-formylmethionyl-tRNA(fMet) subsequently binds. Helps modulate mRNA selection, yielding the 30S pre-initiation complex (PIC). Upon addition of the 50S ribosomal subunit IF-1, IF-2 and IF-3 are released leaving the mature 70S translation initiation complex. The sequence is that of Translation initiation factor IF-1 from Acaryochloris marina (strain MBIC 11017).